We begin with the raw amino-acid sequence, 911 residues long: Bifunctional aspartokinase/homoserine dehydrogenase 1, chloroplastic (911 aa).

The N-terminal 82 residues, 1-82, are a transit peptide targeting the chloroplast; sequence MPVVSLAKVV…VENGHLPKGD (82 aa). The interval 83-331 is aspartokinase; the sequence is SWAVHKFGGT…VSEAVVLKTL (249 aa). The tract at residues 332–557 is interface; sequence SYQEAWEMSY…LSRTTLAVGI (226 aa). ACT domains lie at 407–482 and 488–565; these read VEGT…IIPN and AVGQ…LIGG. The interval 558–911 is homoserine dehydrogenase; the sequence is IGPGLIGGTL…RLAFYLGAPS (354 aa). Residues Ile-563 and Thr-644 each contribute to the NAD(+) site. 3 residues coordinate NADP(+): Ile-563, Thr-644, and Lys-668. Positions 563, 644, and 668 each coordinate NADPH. Positions 695, 698, 700, and 702 each coordinate Na(+). Residues Gly-753 and Glu-756 each contribute to the NADP(+) site. L-homoserine is bound by residues Glu-756 and Asp-767. The active-site Proton donor is the Lys-771. Gly-888 contributes to the NAD(+) binding site. Residue Gly-888 participates in NADP(+) binding. Gly-888 contacts NADPH.

This sequence in the N-terminal section; belongs to the aspartokinase family. In the C-terminal section; belongs to the homoserine dehydrogenase family. As to quaternary structure, homo- or heterodimer. A metal cation serves as cofactor.

It is found in the plastid. It localises to the chloroplast. The enzyme catalyses L-homoserine + NADP(+) = L-aspartate 4-semialdehyde + NADPH + H(+). It catalyses the reaction L-homoserine + NAD(+) = L-aspartate 4-semialdehyde + NADH + H(+). The catalysed reaction is L-aspartate + ATP = 4-phospho-L-aspartate + ADP. Its pathway is amino-acid biosynthesis; L-lysine biosynthesis via DAP pathway; (S)-tetrahydrodipicolinate from L-aspartate: step 1/4. It functions in the pathway amino-acid biosynthesis; L-methionine biosynthesis via de novo pathway; L-homoserine from L-aspartate: step 1/3. The protein operates within amino-acid biosynthesis; L-methionine biosynthesis via de novo pathway; L-homoserine from L-aspartate: step 3/3. It participates in amino-acid biosynthesis; L-threonine biosynthesis; L-threonine from L-aspartate: step 1/5. Its pathway is amino-acid biosynthesis; L-threonine biosynthesis; L-threonine from L-aspartate: step 3/5. With respect to regulation, inhibition of aspartate kinase activity by threonine and leucine and 3-fold activation by cysteine, isoleucine, valine, serine and alanine at 2.5 mM. Partial inhibition of homoserine dehydrogenase activity by threonine and cysteine (14% of activity remaining at saturation with either amino acid). No synergy between the effectors for both activation or inhibition. In terms of biological role, bifunctional aspartate kinase and homoserine dehydrogenase that catalyzes the first and the third steps toward the synthesis of lysine, methionine and threonine from aspartate. In Arabidopsis thaliana (Mouse-ear cress), this protein is Bifunctional aspartokinase/homoserine dehydrogenase 1, chloroplastic.